The primary structure comprises 594 residues: UvrABC system protein C (594 aa).

The 87-residue stretch at Asn13–Ile99 folds into the GIY-YIG domain. The region spanning Asp205–Ile240 is the UVR domain.

The protein belongs to the UvrC family. In terms of assembly, interacts with UvrB in an incision complex.

It is found in the cytoplasm. Functionally, the UvrABC repair system catalyzes the recognition and processing of DNA lesions. UvrC both incises the 5' and 3' sides of the lesion. The N-terminal half is responsible for the 3' incision and the C-terminal half is responsible for the 5' incision. The chain is UvrABC system protein C from Helicobacter pylori (strain G27).